We begin with the raw amino-acid sequence, 217 residues long: Ribosomal RNA small subunit methyltransferase G (217 aa).

S-adenosyl-L-methionine contacts are provided by residues Gly-79, Leu-84, 130-131, and Arg-145; that span reads IE.

The protein belongs to the methyltransferase superfamily. RNA methyltransferase RsmG family.

The protein localises to the cytoplasm. The enzyme catalyses guanosine(527) in 16S rRNA + S-adenosyl-L-methionine = N(7)-methylguanosine(527) in 16S rRNA + S-adenosyl-L-homocysteine. Functionally, specifically methylates the N7 position of guanine in position 527 of 16S rRNA. The polypeptide is Ribosomal RNA small subunit methyltransferase G (Hahella chejuensis (strain KCTC 2396)).